We begin with the raw amino-acid sequence, 270 residues long: MGYIKRMALYMSVFLLIIFIVGCRNMKDEQKKEEQTNKTDSKEEQIKKSFEKTLDMYPIKNLEELYDKEGYRDGEFKKGDKGMWTIYTDFAKSNKQGGLSNEGMVLYLDRNTRTAKGHYFVKTFYNKGKFPDRKNYKVEMKNNKIILLDKVEDTNLKKRIENFKFFGQYANLKELKNYNNGDVSINENVPSYDAKFKMSNKDENVKQLRSRYNIPTDKAPVLKMHIDGNLKGSSVGYKKLEIDFSKGGKSDLSVIDSLNFQPAKVDEDDE.

The N-terminal stretch at 1–22 (MGYIKRMALYMSVFLLIIFIVG) is a signal peptide. Cys-23 is lipidated: N-palmitoyl cysteine. Cys-23 is lipidated: S-diacylglycerol cysteine.

This sequence belongs to the staphylococcal tandem lipoprotein family.

It is found in the cell membrane. This is an uncharacterized protein from Staphylococcus aureus (strain COL).